We begin with the raw amino-acid sequence, 304 residues long: Taste receptor type 2 member 4 (304 aa).

The Extracellular portion of the chain corresponds to 1–10; sequence MLWELYAFVF. The chain crosses the membrane as a helical span at residues 11-31; that stretch reads AASVVFNFVGIVANLFIIVII. Residues 32–46 are Cytoplasmic-facing; sequence SKTWVKSHKISSSDK. The chain crosses the membrane as a helical span at residues 47–67; that stretch reads ILFSLAITRFLTLGLFLLNTV. At 68–80 the chain is on the extracellular side; that stretch reads YIATNTGRSVYFS. Residues 81-101 form a helical membrane-spanning segment; that stretch reads TFFLLCWKFLDSNSLWLVTFL. Topologically, residues 102–128 are cytoplasmic; it reads NCLYCVKITHFQHPVFLLLKRTVSMKT. A helical transmembrane segment spans residues 129–149; the sequence is TSLLLACLLISAFTTLLYFVL. Over 150-171 the chain is Extracellular; sequence TQISRFPEHIIGRNDTLFDVSD. Residue Asn163 is glycosylated (N-linked (GlcNAc...) asparagine). The helical transmembrane segment at 172–192 threads the bilayer; the sequence is GILTLAASLILSSLLQFLLNV. Over 193-229 the chain is Cytoplasmic; sequence TFASLLIHSLRRHVQKMQRNRSSFWNPQTEAHVGAMR. A helical transmembrane segment spans residues 230 to 250; that stretch reads LMICFLVLYIPYSIAALLYFP. The Extracellular segment spans residues 251–260; that stretch reads SYMRKNLRAQ. Residues 261–281 form a helical membrane-spanning segment; it reads AACMIITAAYPPGHSILLIIT. The Cytoplasmic segment spans residues 282-304; the sequence is HHKLKAKAKKICCFYKLRDFVSN.

This sequence belongs to the G-protein coupled receptor T2R family. In terms of tissue distribution, expressed in tongue, stomach and duodenum.

Its subcellular location is the membrane. It localises to the cell projection. The protein resides in the cilium membrane. Its function is as follows. Gustducin-coupled receptor implicated in the perception of bitter compounds in the oral cavity and the gastrointestinal tract. Signals through PLCB2 and the calcium-regulated cation channel TRPM5. In airway epithelial cells, binding of denatonium increases the intracellular calcium ion concentration and stimulates ciliary beat frequency. This is Taste receptor type 2 member 4 from Rattus norvegicus (Rat).